A 178-amino-acid polypeptide reads, in one-letter code: NAD(P)H-quinone oxidoreductase subunit 6, chloroplastic (178 aa).

Helical transmembrane passes span 10 to 30, 32 to 52, 61 to 81, 94 to 114, and 154 to 174; these read FILVFLGSGLILGGLGVVLFT, PIYSAFSLGLVLVCISLFYIL, AQLLIYVGAVNVLIIFAVMFM, LWTIGDGLTSLVCTSIFFSLI, and FFLPFELVSIILLVALIGAIA.

Belongs to the complex I subunit 6 family. In terms of assembly, NDH is composed of at least 16 different subunits, 5 of which are encoded in the nucleus.

Its subcellular location is the plastid. It is found in the chloroplast thylakoid membrane. It carries out the reaction a plastoquinone + NADH + (n+1) H(+)(in) = a plastoquinol + NAD(+) + n H(+)(out). The enzyme catalyses a plastoquinone + NADPH + (n+1) H(+)(in) = a plastoquinol + NADP(+) + n H(+)(out). NDH shuttles electrons from NAD(P)H:plastoquinone, via FMN and iron-sulfur (Fe-S) centers, to quinones in the photosynthetic chain and possibly in a chloroplast respiratory chain. The immediate electron acceptor for the enzyme in this species is believed to be plastoquinone. Couples the redox reaction to proton translocation, and thus conserves the redox energy in a proton gradient. This is NAD(P)H-quinone oxidoreductase subunit 6, chloroplastic (ndhG) from Citrus sinensis (Sweet orange).